Here is a 426-residue protein sequence, read N- to C-terminus: Histidine--tRNA ligase (426 aa).

This sequence belongs to the class-II aminoacyl-tRNA synthetase family. Homodimer.

It localises to the cytoplasm. The catalysed reaction is tRNA(His) + L-histidine + ATP = L-histidyl-tRNA(His) + AMP + diphosphate + H(+). The sequence is that of Histidine--tRNA ligase from Streptococcus thermophilus (strain ATCC BAA-491 / LMD-9).